Consider the following 216-residue polypeptide: Thiosulfate dehydrogenase electron acceptor (216 aa).

The N-terminal stretch at 1-22 (MKSIHWPLAGVAALLLSMQAQA) is a signal peptide. Cytochrome c domains lie at 23-108 (ADGQ…EAMP) and 118-210 (SEAA…ANVG). The heme c site is built by C41, C44, H45, C141, C144, and H145.

Binds 2 heme c groups covalently per subunit.

Functionally, acts as an electron acceptor for the thiosulfate dehydrogenase TsdA. This chain is Thiosulfate dehydrogenase electron acceptor (tsdB), found in Stutzerimonas stutzeri (strain A1501) (Pseudomonas stutzeri).